A 332-amino-acid chain; its full sequence is Phosphate acyltransferase (332 aa).

The protein belongs to the PlsX family. As to quaternary structure, homodimer. Probably interacts with PlsY.

It is found in the cytoplasm. The catalysed reaction is a fatty acyl-[ACP] + phosphate = an acyl phosphate + holo-[ACP]. It participates in lipid metabolism; phospholipid metabolism. Catalyzes the reversible formation of acyl-phosphate (acyl-PO(4)) from acyl-[acyl-carrier-protein] (acyl-ACP). This enzyme utilizes acyl-ACP as fatty acyl donor, but not acyl-CoA. This Nitratiruptor sp. (strain SB155-2) protein is Phosphate acyltransferase.